The chain runs to 157 residues: E3 ubiquitin-protein ligase RHA1B (157 aa).

The RING-type; atypical zinc finger occupies 85-129 (CTVCLSDFVSDDKIRQLPKCGHVFHHRCLDRWIVDCNKITCPICR).

It carries out the reaction S-ubiquitinyl-[E2 ubiquitin-conjugating enzyme]-L-cysteine + [acceptor protein]-L-lysine = [E2 ubiquitin-conjugating enzyme]-L-cysteine + N(6)-ubiquitinyl-[acceptor protein]-L-lysine.. It functions in the pathway protein modification; protein ubiquitination. Its function is as follows. Possesses E3 ubiquitin-protein ligase activity when associated with the E2 enzyme UBC8 in vitro. This is E3 ubiquitin-protein ligase RHA1B from Arabidopsis thaliana (Mouse-ear cress).